The sequence spans 465 residues: Casein kinase 1-like protein 2 (465 aa).

A Protein kinase domain is found at 9–277; that stretch reads FRLGRKIGGG…LKRLFRDLFI (269 aa). ATP-binding positions include 15-23 and Lys38; that span reads IGGGSFGEI. Asp128 (proton acceptor) is an active-site residue. Disordered regions lie at residues 300–344 and 396–428; these read STPP…GIPR and REAA…VSRN. The segment covering 405-428 has biased composition (polar residues); it reads SEPSNPQIVEAGSGSNSKIPVSRN.

It belongs to the protein kinase superfamily. CK1 Ser/Thr protein kinase family. Casein kinase I subfamily. Monomer. Autophosphorylated.

Its subcellular location is the cytoplasm. The protein localises to the nucleus. The catalysed reaction is L-seryl-[protein] + ATP = O-phospho-L-seryl-[protein] + ADP + H(+). It catalyses the reaction L-threonyl-[protein] + ATP = O-phospho-L-threonyl-[protein] + ADP + H(+). Casein kinases are operationally defined by their preferential utilization of acidic proteins such as caseins as substrates. It can phosphorylate a large number of proteins. This chain is Casein kinase 1-like protein 2, found in Arabidopsis thaliana (Mouse-ear cress).